We begin with the raw amino-acid sequence, 303 residues long: Protoheme IX farnesyltransferase (303 aa).

Helical transmembrane passes span 26–46, 48–68, 98–118, 120–140, 148–168, 174–194, 221–241, 244–264, and 278–298; these read VVAL…PGMV, IDIL…AAAV, AILF…VWVN, LTAW…TFWL, IVIG…AVTG, ALLL…ALAV, ILLY…THML, LYLL…VAMM, and YSIV…YLLP.

It belongs to the UbiA prenyltransferase family. Protoheme IX farnesyltransferase subfamily.

The protein resides in the cell inner membrane. The catalysed reaction is heme b + (2E,6E)-farnesyl diphosphate + H2O = Fe(II)-heme o + diphosphate. It functions in the pathway porphyrin-containing compound metabolism; heme O biosynthesis; heme O from protoheme: step 1/1. Functionally, converts heme B (protoheme IX) to heme O by substitution of the vinyl group on carbon 2 of heme B porphyrin ring with a hydroxyethyl farnesyl side group. This is Protoheme IX farnesyltransferase from Saccharophagus degradans (strain 2-40 / ATCC 43961 / DSM 17024).